Here is a 157-residue protein sequence, read N- to C-terminus: Transcriptional repressor NrdR (157 aa).

A disordered region spans residues 1-22; it reads MRCPKCGATKSSVIDSRQAEEG. A zinc finger spans residues 3 to 34; the sequence is CPKCGATKSSVIDSRQAEEGNTIRRRRECDEC. Residues 49 to 139 form the ATP-cone domain; the sequence is LVVVKKDGTR…VYRSFKDVSE (91 aa).

The protein belongs to the NrdR family. Requires Zn(2+) as cofactor.

Negatively regulates transcription of bacterial ribonucleotide reductase nrd genes and operons by binding to NrdR-boxes. In Streptococcus pneumoniae (strain Hungary19A-6), this protein is Transcriptional repressor NrdR.